The chain runs to 78 residues: UPF0349 protein YuzB (78 aa).

It belongs to the UPF0349 family.

This Bacillus subtilis (strain 168) protein is UPF0349 protein YuzB (yuzB).